Here is a 410-residue protein sequence, read N- to C-terminus: Probable serine/threonine-protein kinase PBL8 (410 aa).

Positions 1 to 10 (MGNCGTRDEA) are enriched in basic and acidic residues. The disordered stretch occupies residues 1–45 (MGNCGTRDEAAVFTPQAQAQQLQKKHSRSVSDLSDPSTPRFRDDS). G2 carries N-myristoyl glycine lipidation. The S-palmitoyl cysteine moiety is linked to residue C4. T58 carries the phosphothreonine modification. In terms of domain architecture, Protein kinase spans 69–350 (FRPDYILGEG…DVVETLEPLQ (282 aa)). ATP contacts are provided by residues 75 to 83 (LGEGGFGTV) and K104. A Phosphotyrosine modification is found at Y149. The active-site Proton acceptor is the D199. A phosphoserine mark is found at S203 and S233. T234 and T239 each carry phosphothreonine. Y247 carries the post-translational modification Phosphotyrosine.

Belongs to the protein kinase superfamily. Ser/Thr protein kinase family. Interacts with the Xanthomonas campestris effector XopAC/AvrAC.

It is found in the cell membrane. The catalysed reaction is L-seryl-[protein] + ATP = O-phospho-L-seryl-[protein] + ADP + H(+). The enzyme catalyses L-threonyl-[protein] + ATP = O-phospho-L-threonyl-[protein] + ADP + H(+). May be involved in plant defense signaling. The protein is Probable serine/threonine-protein kinase PBL8 of Arabidopsis thaliana (Mouse-ear cress).